The sequence spans 347 residues: Biotin synthase (347 aa).

The 219-residue stretch at 40 to 258 (AQVQVSTLLS…IAVARIAMPR (219 aa)) folds into the Radical SAM core domain. [4Fe-4S] cluster is bound by residues Cys55, Cys59, and Cys62. Residues Cys99, Cys130, Cys190, and Arg262 each coordinate [2Fe-2S] cluster.

This sequence belongs to the radical SAM superfamily. Biotin synthase family. In terms of assembly, homodimer. [4Fe-4S] cluster is required as a cofactor. It depends on [2Fe-2S] cluster as a cofactor.

The enzyme catalyses (4R,5S)-dethiobiotin + (sulfur carrier)-SH + 2 reduced [2Fe-2S]-[ferredoxin] + 2 S-adenosyl-L-methionine = (sulfur carrier)-H + biotin + 2 5'-deoxyadenosine + 2 L-methionine + 2 oxidized [2Fe-2S]-[ferredoxin]. It participates in cofactor biosynthesis; biotin biosynthesis; biotin from 7,8-diaminononanoate: step 2/2. In terms of biological role, catalyzes the conversion of dethiobiotin (DTB) to biotin by the insertion of a sulfur atom into dethiobiotin via a radical-based mechanism. This chain is Biotin synthase, found in Stenotrophomonas maltophilia (strain K279a).